The following is a 750-amino-acid chain: MTTKTPVIGSFAGVPLHSERAAQSPTEAAVHTHVAAAAAAHGYTPEQLVWHTPEGIDVTPVYIAADRAAAEAEGYPLHSFPGEPPFVRGPYPTMYVNQPWTIRQYAGFSTAADSNAFYRRNLAAGQKGLSVAFDLATHRGYDSDHPRVQGDVGMAGVAIDSILDMRQLFDGIDLSTVSVSMTMNGAVLPILALYVVAAEEQGVAPEQLAGTIQNDILKEFMVRNTYIYPPKPSMRIISDIFAYTSAKMPKFNSISISGYHIQEAGATADLELAYTLADGVDYIRAGLNAGLDIDSFAPRLSFFWGIGMNFFMEVAKLRAGRLLWSELVAQFAPKSAKSLSLRTHSQTSGWSLTAQDVFNNVARTCIEAMAATQGHTQSLHTNALDEALALPTDFSARIARNTQLVLQQESGTTRPIDPWGGSYYVEWLTHRLARRARAHIAEVAEHGGMAQAISDGIPKLRIEEAAARTQARIDSGQQPVVGVNKYQVPEDHEIEVLKVENSRVRAEQLAKLQRLRAGRDEPAVRAALAELTRAAAEQGRAGADGLGNNLLALAIDAARAQATVGEISEALEKVYGRHRAEIRTISGVYRDEVGKAPNIAAATELVEKFAEADGRRPRILIAKMGQDGHDRGQKVIATAFADIGFDVDVGSLFSTPEEVARQAADNDVHVIGVSSLAAGHLTLVPALRDALAQVGRPDIMIVVGGVIPPGDFDELYAAGATAIFPPGTVIADAAIDLLHRLAERLGYTLD.

Positions 91, 94, 101, 103, 105, and 130 each coordinate (R)-methylmalonyl-CoA. Residues Phe133 and Ala155 each contribute to the cob(II)alamin site. (R)-methylmalonyl-CoA is bound by residues Thr211 and Gln213. Residues Val222 and Arg223 each contribute to the cob(II)alamin site. Residues Arg223, His260, Arg299, and Ser301 each contribute to the (R)-methylmalonyl-CoA site. Cob(II)alamin-binding residues include Gly349, Glu386, Ala389, Gly628, His629, Asp630, Arg631, Ser674, Leu676, Gly705, and Thr728. Positions 616-748 constitute a B12-binding domain; the sequence is RPRILIAKMG…HRLAERLGYT (133 aa).

This sequence belongs to the methylmalonyl-CoA mutase family. As to quaternary structure, heterodimer of an alpha and a beta chain. Adenosylcob(III)alamin serves as cofactor.

It catalyses the reaction (R)-methylmalonyl-CoA = succinyl-CoA. The protein operates within metabolic intermediate metabolism; propanoyl-CoA degradation; succinyl-CoA from propanoyl-CoA: step 3/3. In terms of biological role, catalyzes the isomerization of succinyl-CoA to methylmalonyl-CoA during synthesis of propionate from tricarboxylic acid-cycle intermediates. This Mycobacterium bovis (strain ATCC BAA-935 / AF2122/97) protein is Probable methylmalonyl-CoA mutase large subunit (mutB).